The sequence spans 747 residues: WD repeat-containing protein 91 (747 aa).

Positions 183 to 227 form a coiled coil; it reads QRTNQVQEENEVLRQKLFALQAEVHRLKKEEQQQEEAAALVQHKL. At serine 256 the chain carries Phosphoserine. Over residues 265 to 278 the composition is skewed to low complexity; it reads LLPQSKKSPSRLSP. The segment at 265–358 is disordered; the sequence is LLPQSKKSPS…SQTQCAEKKL (94 aa). Residues 283 to 299 show a composition bias toward polar residues; it reads PQAQSSAKKDTFSSQAT. A Phosphoserine modification is found at serine 288. Residues 332-343 show a composition bias toward basic and acidic residues; that stretch reads RLQDHGKERREL. The span at 344–353 shows a compositional bias: polar residues; it reads LSTSSSQTQC. WD repeat units lie at residues 406–445, 448–488, 511–555, 560–599, 602–641, 664–702, and 709–747; these read EHHSSIMHCRVDCSGRRVASLDVDGVIKVWSFNPIMQTKA, ISKS…NLCE, VCSA…QQLQ, PEPIAINCTAFNHNGNLLVTGAADGVIRLFDMQQHGCAMS, AHCGEVYSVEFSYDENAVNSIGEDGKFIQWNIHKSGLKVS, VQVPRGRLFAFDSEGNYMLTCSATGGLIYKLGSEEKVLE, and GHRAPVVTVDWSTAMDCGTCLTASMDGKIKLTTLLAHKL.

The protein belongs to the WD repeat WDR91 family. In terms of assembly, interacts with WDR81; involved in early to late endosome cargo transport. Interacts with BECN1; negatively regulates the PI3 kinase/PI3K activity associated with endosomal membranes.

The protein resides in the early endosome membrane. The protein localises to the late endosome membrane. Functions as a negative regulator of the PI3 kinase/PI3K activity associated with endosomal membranes via BECN1, a core subunit of the PI3K complex. By modifying the phosphatidylinositol 3-phosphate/PtdInsP3 content of endosomal membranes may regulate endosome fusion, recycling, sorting and early to late endosome transport. It is for instance, required for the delivery of cargos like BST2/tetherin from early to late endosome and thereby participates indirectly to their degradation by the lysosome. May play a role in meiosis. In Rattus norvegicus (Rat), this protein is WD repeat-containing protein 91.